Reading from the N-terminus, the 324-residue chain is Glucosyl-3-phosphoglycerate synthase (324 aa).

UDP-alpha-D-glucose is bound by residues 50-54 (PALNE), Ser-81, Lys-114, and 134-135 (DS). Asp-136 provides a ligand contact to Mn(2+). 184–187 (GRVT) serves as a coordination point for (2R)-3-phosphoglycerate. UDP-alpha-D-glucose-binding positions include 229–232 (YGVE) and 256–261 (RAHRNR). Position 258 (His-258) interacts with Mn(2+). Residue Asn-260 coordinates (2R)-3-phosphoglycerate.

It belongs to the glycosyltransferase 2 family. In terms of assembly, homotrimer. Mg(2+) is required as a cofactor. The cofactor is Mn(2+).

The enzyme catalyses an NDP-alpha-D-glucose + (2R)-3-phosphoglycerate = (2R)-2-O-(alpha-D-glucopyranosyl)-3-phospho-glycerate + a ribonucleoside 5'-diphosphate + H(+). It catalyses the reaction (2R)-3-phosphoglycerate + UDP-alpha-D-glucose = (2R)-2-O-(alpha-D-glucopyranosyl)-3-phospho-glycerate + UDP + H(+). It carries out the reaction ADP-alpha-D-glucose + (2R)-3-phosphoglycerate = (2R)-2-O-(alpha-D-glucopyranosyl)-3-phospho-glycerate + ADP + H(+). The catalysed reaction is GDP-D-glucose + (2R)-3-phosphoglycerate = (2R)-2-O-(alpha-D-glucopyranosyl)-3-phospho-glycerate + GDP + H(+). Involved in the biosynthesis of 6-O-methylglucose lipopolysaccarides (MGLPs). Catalyzes the transfer of the glucose moiety from a nuleotide sugar such as UDP-alpha-D-glucose to the position 2 of 3-phospho-D-glycerate (3-PGA) to form glucosyl-3-phosphoglycerate (GPG). It can use UDP-glucose, ADP-glucose and GDP-glucose as sugar donor substrates with decreasing affinity and with 3-PGA as an acceptor. D-glycerate can only be an acceptor with ADP-glucose and at a very low rate. This Mycobacterium bovis (strain ATCC BAA-935 / AF2122/97) protein is Glucosyl-3-phosphoglycerate synthase (gpgS).